The sequence spans 421 residues: Trimethyllysine dioxygenase, mitochondrial (421 aa).

A mitochondrion-targeting transit peptide spans 1–15 (MWCHRLSHLQSRLQD). Lys-236 is subject to N6-acetyllysine. Positions 242, 244, and 389 each coordinate Fe cation.

This sequence belongs to the gamma-BBH/TMLD family. In terms of assembly, homodimer. Requires Fe(2+) as cofactor. The cofactor is L-ascorbate.

The protein localises to the mitochondrion matrix. The enzyme catalyses N(6),N(6),N(6)-trimethyl-L-lysine + 2-oxoglutarate + O2 = (3S)-3-hydroxy-N(6),N(6),N(6)-trimethyl-L-lysine + succinate + CO2. Its pathway is amine and polyamine biosynthesis; carnitine biosynthesis. In terms of biological role, converts trimethyllysine (TML) into hydroxytrimethyllysine (HTML). In Bos taurus (Bovine), this protein is Trimethyllysine dioxygenase, mitochondrial (TMLHE).